The sequence spans 120 residues: Chaperonin GroEL (120 aa).

Position 23–27 (Asp-23–Thr-27) interacts with ATP.

This sequence belongs to the chaperonin (HSP60) family. In terms of assembly, forms a cylinder of 14 subunits composed of two heptameric rings stacked back-to-back. Interacts with the co-chaperonin GroES.

The protein resides in the cytoplasm. It carries out the reaction ATP + H2O + a folded polypeptide = ADP + phosphate + an unfolded polypeptide.. Its function is as follows. Together with its co-chaperonin GroES, plays an essential role in assisting protein folding. The GroEL-GroES system forms a nano-cage that allows encapsulation of the non-native substrate proteins and provides a physical environment optimized to promote and accelerate protein folding. The protein is Chaperonin GroEL of Mycobacterium scrofulaceum.